The sequence spans 1370 residues: Zinc finger MYM-type protein 3 (1370 aa).

Low complexity-rich tracts occupy residues Met1 to Pro12 and Pro52 to Asp61. Disordered stretches follow at residues Met1 to Val72 and Pro90 to Gly301. Basic and acidic residues predominate over residues Ala230–Val253. 2 positions are modified to phosphoserine: Ser263 and Ser267. Residues Ser263–Phe279 show a composition bias toward acidic residues. Glycyl lysine isopeptide (Lys-Gly) (interchain with G-Cter in SUMO2) cross-links involve residues Lys308, Lys320, and Lys328. 9 MYM-type zinc fingers span residues Gln332–Ser366, His378–Val422, His429–Ser464, Lys477–Leu511, Ser521–Tyr559, Tyr567–Val604, Phe612–Leu646, Lys653–Glu692, and Trp699–Ile733. Ser464 bears the Phosphoserine mark. A compositionally biased stretch (polar residues) spans Asn759–Arg794. Residues Asn759–Asn830 form a disordered region. Residues Lys778 and Lys786 each participate in a glycyl lysine isopeptide (Lys-Gly) (interchain with G-Cter in SUMO2) cross-link. Thr795 is subject to Phosphothreonine. Lys804 participates in a covalent cross-link: Glycyl lysine isopeptide (Lys-Gly) (interchain with G-Cter in SUMO2). Over residues Ala815–Thr826 the composition is skewed to pro residues. 2 positions are modified to phosphothreonine: Thr817 and Thr826. Glycyl lysine isopeptide (Lys-Gly) (interchain with G-Cter in SUMO2) cross-links involve residues Lys847, Lys861, Lys920, and Lys1275.

May be a component of a BHC histone deacetylase complex that contains HDAC1, HDAC2, HMG20B/BRAF35, KDM1A, RCOR1/CoREST, PHF21A/BHC80, ZMYM2, ZNF217, ZMYM3, GSE1 and GTF2I. As to expression, most abundant in brain, moderate in muscle and heart, low in other tissues except placenta.

The protein resides in the nucleus. In terms of biological role, plays a role in the regulation of cell morphology and cytoskeletal organization. The sequence is that of Zinc finger MYM-type protein 3 (ZMYM3) from Homo sapiens (Human).